Consider the following 227-residue polypeptide: Translation initiation factor 6 (227 aa).

This sequence belongs to the eIF-6 family.

Functionally, binds to the 50S ribosomal subunit and prevents its association with the 30S ribosomal subunit to form the 70S initiation complex. The chain is Translation initiation factor 6 from Pyrococcus horikoshii (strain ATCC 700860 / DSM 12428 / JCM 9974 / NBRC 100139 / OT-3).